Reading from the N-terminus, the 433-residue chain is Adenylosuccinate synthetase (433 aa).

GTP is bound by residues 13–19 (GDEGKGK) and 41–43 (GHT). Asp-14 (proton acceptor) is an active-site residue. Mg(2+)-binding residues include Asp-14 and Gly-41. Residues 14 to 17 (DEGK), 39 to 42 (NAGH), Thr-130, Arg-144, Gln-225, Thr-240, and Arg-304 contribute to the IMP site. The Proton donor role is filled by His-42. A substrate-binding site is contributed by 300–306 (STTGRKR). Residues Arg-306, 332–334 (KLD), and 414–416 (STG) each bind GTP.

It belongs to the adenylosuccinate synthetase family. In terms of assembly, homodimer. Mg(2+) serves as cofactor.

It localises to the cytoplasm. The catalysed reaction is IMP + L-aspartate + GTP = N(6)-(1,2-dicarboxyethyl)-AMP + GDP + phosphate + 2 H(+). The protein operates within purine metabolism; AMP biosynthesis via de novo pathway; AMP from IMP: step 1/2. Its function is as follows. Plays an important role in the de novo pathway of purine nucleotide biosynthesis. Catalyzes the first committed step in the biosynthesis of AMP from IMP. The chain is Adenylosuccinate synthetase from Buchnera aphidicola subsp. Acyrthosiphon pisum (strain APS) (Acyrthosiphon pisum symbiotic bacterium).